A 519-amino-acid chain; its full sequence is 2,3-bisphosphoglycerate-independent phosphoglycerate mutase (519 aa).

Residues Asp-18 and Ser-68 each coordinate Mn(2+). Ser-68 acts as the Phosphoserine intermediate in catalysis. Substrate is bound by residues His-129, 159-160, Arg-191, Arg-197, 267-270, and Lys-341; these read RD and RADR. Residues Asp-408, His-412, Asp-449, His-450, and His-468 each coordinate Mn(2+).

It belongs to the BPG-independent phosphoglycerate mutase family. Monomer. Mn(2+) serves as cofactor.

It catalyses the reaction (2R)-2-phosphoglycerate = (2R)-3-phosphoglycerate. Its pathway is carbohydrate degradation; glycolysis; pyruvate from D-glyceraldehyde 3-phosphate: step 3/5. Catalyzes the interconversion of 2-phosphoglycerate and 3-phosphoglycerate. This Coxiella burnetii (strain Dugway 5J108-111) protein is 2,3-bisphosphoglycerate-independent phosphoglycerate mutase.